Here is a 147-residue protein sequence, read N- to C-terminus: Large ribosomal subunit protein uL13 (147 aa).

This sequence belongs to the universal ribosomal protein uL13 family. In terms of assembly, part of the 50S ribosomal subunit.

Functionally, this protein is one of the early assembly proteins of the 50S ribosomal subunit, although it is not seen to bind rRNA by itself. It is important during the early stages of 50S assembly. This Lactobacillus delbrueckii subsp. bulgaricus (strain ATCC 11842 / DSM 20081 / BCRC 10696 / JCM 1002 / NBRC 13953 / NCIMB 11778 / NCTC 12712 / WDCM 00102 / Lb 14) protein is Large ribosomal subunit protein uL13.